The following is a 195-amino-acid chain: Probable nicotinate-nucleotide adenylyltransferase (195 aa).

Belongs to the NadD family.

It carries out the reaction nicotinate beta-D-ribonucleotide + ATP + H(+) = deamido-NAD(+) + diphosphate. Its pathway is cofactor biosynthesis; NAD(+) biosynthesis; deamido-NAD(+) from nicotinate D-ribonucleotide: step 1/1. Functionally, catalyzes the reversible adenylation of nicotinate mononucleotide (NaMN) to nicotinic acid adenine dinucleotide (NaAD). This chain is Probable nicotinate-nucleotide adenylyltransferase, found in Bordetella petrii (strain ATCC BAA-461 / DSM 12804 / CCUG 43448).